The sequence spans 145 residues: Large ribosomal subunit protein uL13 (145 aa).

This sequence belongs to the universal ribosomal protein uL13 family. As to quaternary structure, part of the 50S ribosomal subunit.

In terms of biological role, this protein is one of the early assembly proteins of the 50S ribosomal subunit, although it is not seen to bind rRNA by itself. It is important during the early stages of 50S assembly. The protein is Large ribosomal subunit protein uL13 of Bacillus cereus (strain ZK / E33L).